The sequence spans 97 residues: Acylphosphatase (97 aa).

The Acylphosphatase-like domain maps to 11–97; it reads TYYVRVRGTV…EKRYERFEQH (87 aa). Residues R26 and N44 contribute to the active site. A disordered region spans residues 76-97; it reads RVTEVSGEERSTEKRYERFEQH. Over residues 82–97 the composition is skewed to basic and acidic residues; it reads GEERSTEKRYERFEQH.

The protein belongs to the acylphosphatase family.

The catalysed reaction is an acyl phosphate + H2O = a carboxylate + phosphate + H(+). This chain is Acylphosphatase (acyP), found in Paraburkholderia xenovorans (strain LB400).